Reading from the N-terminus, the 396-residue chain is Elongation factor Tu (396 aa).

A tr-type G domain is found at K11 to E205. The tract at residues G20–T27 is G1. G20–T27 serves as a coordination point for GTP. Residue T27 participates in Mg(2+) binding. A G2 region spans residues G61–N65. The G3 stretch occupies residues D82 to G85. Residues D82–H86 and N137–D140 contribute to the GTP site. Residues N137 to D140 are G4. The interval S175–L177 is G5.

Belongs to the TRAFAC class translation factor GTPase superfamily. Classic translation factor GTPase family. EF-Tu/EF-1A subfamily. In terms of assembly, monomer.

The protein resides in the cytoplasm. It catalyses the reaction GTP + H2O = GDP + phosphate + H(+). Functionally, GTP hydrolase that promotes the GTP-dependent binding of aminoacyl-tRNA to the A-site of ribosomes during protein biosynthesis. This chain is Elongation factor Tu, found in Lactobacillus acidophilus (strain ATCC 700396 / NCK56 / N2 / NCFM).